The primary structure comprises 157 residues: uncharacterized protein (157 aa).

Residues 1-157 (MNRGPPLRSR…SFSFLVPSNS (157 aa)) form a disordered region. The span at 8–31 (RSRPPSSPPPASAFPGPSPFPSPS) shows a compositional bias: pro residues. Residues 62–71 (RTSHPPRCPH) are compositionally biased toward basic residues. Residues 76–95 (PSAPSPPFTPPHPLPTPTPS) show a composition bias toward pro residues. Composition is skewed to low complexity over residues 96-117 (SSPR…SLAS) and 124-157 (SFSS…PSNS).

This is an uncharacterized protein from Vitis vinifera (Grape).